The chain runs to 447 residues: N-succinylarginine dihydrolase (447 aa).

Residues 19-28 (AGLSFGNEAS), asparagine 110, and 137-138 (HR) each bind substrate. Glutamate 174 is an active-site residue. Residue arginine 212 coordinates substrate. The active site involves histidine 248. Residues aspartate 250 and asparagine 359 each contribute to the substrate site. The active-site Nucleophile is the cysteine 365.

This sequence belongs to the succinylarginine dihydrolase family. As to quaternary structure, homodimer.

The enzyme catalyses N(2)-succinyl-L-arginine + 2 H2O + 2 H(+) = N(2)-succinyl-L-ornithine + 2 NH4(+) + CO2. The protein operates within amino-acid degradation; L-arginine degradation via AST pathway; L-glutamate and succinate from L-arginine: step 2/5. Its function is as follows. Catalyzes the hydrolysis of N(2)-succinylarginine into N(2)-succinylornithine, ammonia and CO(2). This Salmonella paratyphi A (strain ATCC 9150 / SARB42) protein is N-succinylarginine dihydrolase.